Consider the following 336-residue polypeptide: Zinc finger protein GFI1 homolog pag-3 (336 aa).

5 consecutive C2H2-type zinc fingers follow at residues 126 to 148 (FHCQ…QQVH), 154 to 176 (FECK…LLIH), 182 to 204 (YPCE…TYIH), 210 to 232 (HKCT…TRKH), and 238 to 260 (FACD…RESH). The tract at residues 253–290 (RRRHRESHHPGHPEECVSASQISSDLSPKGYMTPPTSN) is disordered.

In terms of assembly, may interact with transcription factor unc-3. As to expression, expressed in the BDU neurons, the touch neurons, the VA, VB and VC motor neurons, two AVF interneurons and unidentified neurons of the retrovesicular ganglion (at protein level).

It is found in the nucleus. The protein localises to the cell projection. It localises to the axon. The protein resides in the perikaryon. Transcription factor. Plays a role in the determination of neuroblast cell fate and neuronal differentiation. Negatively modulates expression of several components of dense-core vesicles (DCVs), thereby, in a DCV membrane protein ida-1-dependent manner, regulating neurosecretion. Negatively modulates the transcription of its own gene, the mechanosensory gene mec-3, and also other touch neuron-specific genes in the BDU neurons; required for coordinated movement. Required to determine the identity of BDU sensory neurons in concert with transcription factor unc-86, regulating expression of a number of genes, including transcription factors ceh-14 and ahr-1, neuropeptides flp-10, nlp-1 and nlp-15, and tyramine receptor-encoding ser-2. Acts in concert with non-canonical WNT signaling to negatively modulate transcription of mec-3 gene in BDU neurons. May act in concert with transcription factor unc-3 in motor neuron fate determination. May play a role programmed cell death. In Caenorhabditis elegans, this protein is Zinc finger protein GFI1 homolog pag-3.